A 749-amino-acid polypeptide reads, in one-letter code: NAD(P)H-quinone oxidoreductase subunit 5, chloroplastic (749 aa).

Transmembrane regions (helical) follow at residues 9 to 29 (WIIPFLPLPIPMLLGVGLLLF), 40 to 60 (WSFTSVLLLSIVMTFSVNLSI), 89 to 109 (IDPLTSIMSILITTVGIMVLI), 125 to 145 (FAYMSFFNASMLGLVTSSNLI), 147 to 167 (IYIFWELVGMCSYLLIGFWFT), 185 to 205 (GDFGLLLGILGLYWITGSFEF), 221 to 241 (NGTNFLFVSLCALFLFVGAVA), 260 to 280 (TPISALIHAATMVAAGIFLVA), 285 to 305 (LFIVIPYIMNLISLIGIITIL), 329 to 349 (LGYTMLALGMGSYRAALFHLI), 356 to 376 (ALLFLGSGSIIHSMEAIVGYS), 398 to 418 (NTFLLGTLSLCGIPPLACFWS), 427 to 447 (WLYSPIFAIIACLTAGLTAFY), 553 to 573 (LFPLFALALFTLFVGAIGIPF), 607 to 627 (FVINAIFSVSISYFGIFLASL), and 727 to 747 (SYLFLYLSSVSILLLISYFFL).

Belongs to the complex I subunit 5 family. NDH is composed of at least 16 different subunits, 5 of which are encoded in the nucleus.

Its subcellular location is the plastid. It localises to the chloroplast thylakoid membrane. The enzyme catalyses a plastoquinone + NADH + (n+1) H(+)(in) = a plastoquinol + NAD(+) + n H(+)(out). It carries out the reaction a plastoquinone + NADPH + (n+1) H(+)(in) = a plastoquinol + NADP(+) + n H(+)(out). In terms of biological role, NDH shuttles electrons from NAD(P)H:plastoquinone, via FMN and iron-sulfur (Fe-S) centers, to quinones in the photosynthetic chain and possibly in a chloroplast respiratory chain. The immediate electron acceptor for the enzyme in this species is believed to be plastoquinone. Couples the redox reaction to proton translocation, and thus conserves the redox energy in a proton gradient. In Vitis vinifera (Grape), this protein is NAD(P)H-quinone oxidoreductase subunit 5, chloroplastic (ndhF).